The primary structure comprises 74 residues: Ferredoxin MycCII (74 aa).

The region spanning 1-29 (MRIVLDAERCVGAGQCEATAPELFTQGDD) is the 4Fe-4S ferredoxin-type domain. [3Fe-4S] cluster contacts are provided by Cys-10, Cys-16, and Cys-54.

Requires [3Fe-4S] cluster as cofactor.

Its pathway is antibiotic biosynthesis; mycinamicin biosynthesis. Specific electron transport protein capable of effectively supporting cytochrome P450 MycCI activity in the biosynthesis of mycinamicin, a 16-membered macrolide antibiotic. The sequence is that of Ferredoxin MycCII from Micromonospora griseorubida.